An 85-amino-acid polypeptide reads, in one-letter code: U1-theraphotoxin-Hs1a (85 aa).

Residues 1–22 (MKVTLIAILTCAAVLVLHTTAA) form the signal peptide. Residues 23–48 (EELEAESQLMEVGMPDTELAAVDEER) constitute a propeptide that is removed on maturation. Cystine bridges form between cysteine 52-cysteine 66, cysteine 56-cysteine 77, and cysteine 71-cysteine 82.

As to quaternary structure, heterodimer composed of the two variants Ile-58 and Gln-58. Expressed by the venom gland.

The protein localises to the secreted. Lethal neurotoxin that blocks neuromuscular transmission. Acts cooperatively to potentiate the activity of huwentoxin-I. This toxin is active against insects. The sequence is that of U1-theraphotoxin-Hs1a from Cyriopagopus schmidti (Chinese bird spider).